Reading from the N-terminus, the 503-residue chain is Maturase K (503 aa).

The protein belongs to the intron maturase 2 family. MatK subfamily.

It localises to the plastid. The protein localises to the chloroplast. Its function is as follows. Usually encoded in the trnK tRNA gene intron. Probably assists in splicing its own and other chloroplast group II introns. The sequence is that of Maturase K from Kunzea baxteri (Scarlet kunzea).